The primary structure comprises 401 residues: G2/mitotic-specific cyclin-B1 (401 aa).

Disordered stretches follow at residues 1–30 and 84–103; these read MALR…PTLK and KVQV…ETSG. The segment covering 9–26 has biased composition (polar residues); it reads RLASTRAEQGGKTCSVSG.

Belongs to the cyclin family. Cyclin AB subfamily. As to quaternary structure, interacts with the CDK1 protein kinase to form a serine/threonine kinase holoenzyme complex also known as maturation promoting factor (MPF). The cyclin subunit imparts substrate specificity to the complex.

Functionally, essential for the control of the cell cycle at the G2/M (mitosis) transition. The protein is G2/mitotic-specific cyclin-B1 (ccnb1) of Oryzias javanicus (Javanese ricefish).